Reading from the N-terminus, the 131-residue chain is MSMHDPISDMLTRIRNGQHASKVKVSMPSSKLKIALAQVLKEEGYIEDFAIAGEEKKPVLDIQLKYYAGRPVIERIERVSRPGLRVYKGSTEIPKVMNGLGVAILSTSKGVMTDRKARAAGIGGELLCVVA.

It belongs to the universal ribosomal protein uS8 family. As to quaternary structure, part of the 30S ribosomal subunit. Contacts proteins S5 and S12.

One of the primary rRNA binding proteins, it binds directly to 16S rRNA central domain where it helps coordinate assembly of the platform of the 30S subunit. This is Small ribosomal subunit protein uS8 from Chromobacterium violaceum (strain ATCC 12472 / DSM 30191 / JCM 1249 / CCUG 213 / NBRC 12614 / NCIMB 9131 / NCTC 9757 / MK).